We begin with the raw amino-acid sequence, 255 residues long: Tail completion protein p143 (255 aa).

Its subcellular location is the virion. Functionally, putative role in tail stability. This chain is Tail completion protein p143, found in Escherichia phage T5 (Enterobacteria phage T5).